A 309-amino-acid polypeptide reads, in one-letter code: Probable 2,4-dienoyl-CoA reductase decr-1.2 [(3E)-enoyl-CoA-producing] (309 aa).

Residues 28-60 (VLVT…RRME), 32-37 (GGGTGI), R57, and D83 each bind NADP(+). R57 provides a ligand contact to substrate. The substrate site is built by F116 and S124. Y166 functions as the Proton acceptor in the catalytic mechanism. Residues K181 and 207–210 (PGPI) contribute to the NADP(+) site. R218 contacts substrate.

This sequence belongs to the short-chain dehydrogenases/reductases (SDR) family. 2,4-dienoyl-CoA reductase subfamily.

It carries out the reaction a (2E,4E)-dienoyl-CoA + NADPH + H(+) = a 4,5-saturated-(3E)-enoyl-CoA + NADP(+). The catalysed reaction is a (2E,4Z)-dienoyl-CoA + NADPH + H(+) = a 4,5-saturated-(3E)-enoyl-CoA + NADP(+). Auxiliary enzyme of beta-oxidation. It participates in the metabolism of unsaturated fatty enoyl-CoA esters having double bonds in both even- and odd-numbered positions. Catalyzes the NADP-dependent reduction of 2,4-dienoyl-CoA to yield trans-3-enoyl-CoA. This is Probable 2,4-dienoyl-CoA reductase decr-1.2 [(3E)-enoyl-CoA-producing] from Caenorhabditis elegans.